The chain runs to 487 residues: MKYKSIMLLGTASSVGKSTVAAAFCRYFKKKGYRVAPYKALNISLNSFVTKEGDEIGRAQVVQAEACEIDPKEYMNPILMKPSAGFKTQVIVRGKVHCTMDAYKYKELNKYLKEKAKEAYDDISNDYDLIVLEGSGSCAEINLRETDIANMHTAKIADADVILVADINRGGVFASIVGTIMLLTEEERKRVKGVIINKFRGKREFFEPAMRQIEEIIKIPVLGVMPYFDLDIEEEDSASIKLRKGNGKGIDIAIVRLPHMSNFTDFNSLGRIKDVGIRYAENPKDLENANMIIIPGSKNTIDDLIYLKESGFKEALINESSNGKLIFGICGGYQILGEKIIDSLGVEGDIREEEGLGLLNIVTSFNKEKTTKQVVAFDLEGNEVSGYEIHNGESVPTAKENIWIKEKNGNVLGMNNKEQNVFGTYIHGIFDEGDFGEKLINKLKKELNIEESNEVNYKDYKMSQYDKLCELLEENIDMAYVENLIRS.

The GATase cobBQ-type domain maps to 249-435 (GIDIAIVRLP…IHGIFDEGDF (187 aa)). The active-site Nucleophile is Cys-330. Residue His-427 is part of the active site.

Belongs to the CobB/CobQ family. CobQ subfamily.

The protein operates within cofactor biosynthesis; adenosylcobalamin biosynthesis. In terms of biological role, catalyzes amidations at positions B, D, E, and G on adenosylcobyrinic A,C-diamide. NH(2) groups are provided by glutamine, and one molecule of ATP is hydrogenolyzed for each amidation. The chain is Cobyric acid synthase from Clostridium perfringens (strain ATCC 13124 / DSM 756 / JCM 1290 / NCIMB 6125 / NCTC 8237 / Type A).